The chain runs to 192 residues: Tail tip assembly protein I (192 aa).

Belongs to the lambda-like tail tip protein I family.

The protein localises to the host cytoplasm. Its function is as follows. Plays a role in tail tip complex assembly. The tail tip complex is assembled successively with three tail tip proteins J, one tail tip protein I, one tail tip protein L and one tail tip protein K. The tail tip complex interacts with tail measure protein to initiate tail tube assembly. The formation of the tail tip complex is completed by the addition of tail tip protein M, which is followed by tail tube polymerization. May be excluded form tail tip during maturation and would be absent from virions. The polypeptide is Tail tip assembly protein I (Escherichia phage N15 (Bacteriophage N15)).